The following is a 543-amino-acid chain: Hydroxylamine reductase (543 aa).

[4Fe-4S] cluster contacts are provided by cysteine 3, cysteine 6, cysteine 15, and cysteine 21. Residues histidine 244, glutamate 268, cysteine 312, cysteine 399, cysteine 427, cysteine 452, glutamate 486, and lysine 488 each contribute to the hybrid [4Fe-2O-2S] cluster site. Cysteine 399 is subject to Cysteine persulfide.

The protein belongs to the HCP family. [4Fe-4S] cluster serves as cofactor. Hybrid [4Fe-2O-2S] cluster is required as a cofactor.

It is found in the cytoplasm. The catalysed reaction is A + NH4(+) + H2O = hydroxylamine + AH2 + H(+). Its function is as follows. Catalyzes the reduction of hydroxylamine to form NH(3) and H(2)O. In Methanocella arvoryzae (strain DSM 22066 / NBRC 105507 / MRE50), this protein is Hydroxylamine reductase.